The chain runs to 76 residues: Conotoxin Cal5a L3 (76 aa).

Positions 1–22 (MRFYIGLMAALMLTSVLRTDSA) are cleaved as a signal peptide. The propeptide occupies 23 to 42 (SVGQTGTKSELAVIERVIRQ). A 4-hydroxyproline modification is found at Pro50. Residues Pro58, Pro62, and Pro64 each carry the 4-hydroxyproline; partial modification.

It belongs to the conotoxin T superfamily. In terms of processing, contains 2 disulfide bonds that can be either 'C1-C3, C2-C4' or 'C1-C4, C2-C3', since these disulfide connectivities have been observed for conotoxins with cysteine framework V (for examples, see AC P0DQQ7 and AC P81755). Expressed by the venom duct.

It localises to the secreted. Functionally, probable neurotoxin with unknown target. Possibly targets ion channels. The protein is Conotoxin Cal5a L3 of Californiconus californicus (California cone).